The primary structure comprises 311 residues: Olfactory receptor 4S2 (311 aa).

Residues 1-23 are Extracellular-facing; the sequence is MEKINNVTEFIFWGLSQSPEIEK. N-linked (GlcNAc...) asparagine glycosylation occurs at N6. A helical membrane pass occupies residues 24–47; sequence VCFVVFSFFYIIILLGNLLIMLTV. The Cytoplasmic segment spans residues 48–55; it reads CLSNLFKS. A helical membrane pass occupies residues 56–77; it reads PMYFFLSFLSFVDICYSSVTAP. The Extracellular portion of the chain corresponds to 78-98; that stretch reads KMIVDLLAKDKTISYVGCMLQ. C95 and C187 form a disulfide bridge. A helical transmembrane segment spans residues 99–118; it reads LFGVHFFGCTEIFILTVMAY. Residues 119 to 137 are Cytoplasmic-facing; the sequence is DRYVAICKPLHYMTIMNRE. A helical membrane pass occupies residues 138-156; the sequence is TCNKMLLGTWVGGFLHSII. Over 157-193 the chain is Extracellular; it reads QVALVVQLPFCGPNEIDHYFCDVHPVLKLACTETYIV. A helical transmembrane segment spans residues 194–217; it reads GVVVTANSGTIALGSFVILLISYS. Over 218–233 the chain is Cytoplasmic; sequence IILVSLRKQSAEGRRK. The chain crosses the membrane as a helical span at residues 234–256; it reads ALSTCGSHIAMVVIFFGPCTFMY. Topologically, residues 257–267 are extracellular; it reads MRPDTTFSEDK. The chain crosses the membrane as a helical span at residues 268–287; that stretch reads MVAVFYTIITPMLNPLIYTL. Residues 288–311 are Cytoplasmic-facing; the sequence is RNAEVKNAMKKLWGRNVFLEAKGK.

This sequence belongs to the G-protein coupled receptor 1 family.

Its subcellular location is the cell membrane. Its function is as follows. Odorant receptor. This chain is Olfactory receptor 4S2 (OR4S2), found in Homo sapiens (Human).